The sequence spans 481 residues: MTDQVFGKVSKVVCVGAGYVGGPTCAMIAHKCPHITVTVVDMNTAKIAEWNSDKLPIYEPGLDEIVFAARGRNLFFSSDIPKAIAEADLIFISVNTPTKMYGRGKGMAPDLKYVESVSRTIAQYAGGPKIVVEKSTVPVKAAESIGCILREAQKNNENLKFQVLSNPEFLAEGTAMKDLANPDRVLIGGESSPEGLQAVAELVRIYENWVPRNRIITTNTWSSELSKLVANAFLAQRISSINSISAVCEATGAEISEVAHAVGYDTRIGSKFLQASVGFGGSCFQKDVLSLVYLCESLNLPQVADYWQGVININNWQRRRFADKIIAELFNTVTDKKIAIFGFAFKKNTGDTRESSAIHVIKHLMEEHAKLSVYDPKVQKSQMLNDLASVTSAQDVERLITVESDPYAAARGAHAIVVLTEWDEFVELNYSQIHNDMQHPAAIFDGRLILDQKALREIGFRTFAIGTSPDQAYNLFGTAGY.

NAD(+) contacts are provided by residues 16 to 21, Asp41, Lys46, 94 to 98, 135 to 136, and Glu172; these read GAGYVG, VNTPT, and ST. Substrate contacts are provided by residues 168–172, 227–231, Arg267, and 274–280; these read EFLAE, KLVAN, and QASVGFG. Cys283 acts as the Nucleophile in catalysis. 283–286 contributes to the NAD(+) binding site; that stretch reads CFQK. 345-346 provides a ligand contact to substrate; that stretch reads FK. Arg353 is a binding site for NAD(+). Arg447 contacts substrate.

This sequence belongs to the UDP-glucose/GDP-mannose dehydrogenase family. As to expression, expressed in the vulva and in oocytes.

The catalysed reaction is UDP-alpha-D-glucose + 2 NAD(+) + H2O = UDP-alpha-D-glucuronate + 2 NADH + 3 H(+). It participates in nucleotide-sugar biosynthesis; UDP-alpha-D-glucuronate biosynthesis; UDP-alpha-D-glucuronate from UDP-alpha-D-glucose: step 1/1. Functionally, involved in the biosynthesis of glycosaminoglycans; hyaluronan, chondroitin sulfate, and heparan sulfate. The protein is UDP-glucose 6-dehydrogenase (sqv-4) of Caenorhabditis elegans.